Reading from the N-terminus, the 94-residue chain is Large ribosomal subunit protein bL25 (94 aa).

This sequence belongs to the bacterial ribosomal protein bL25 family. As to quaternary structure, part of the 50S ribosomal subunit; part of the 5S rRNA/L5/L18/L25 subcomplex. Contacts the 5S rRNA. Binds to the 5S rRNA independently of L5 and L18.

This is one of the proteins that binds to the 5S RNA in the ribosome where it forms part of the central protuberance. The protein is Large ribosomal subunit protein bL25 of Salmonella arizonae (strain ATCC BAA-731 / CDC346-86 / RSK2980).